The primary structure comprises 192 residues: dCTP deaminase, dUMP-forming (192 aa).

DCTP is bound by residues 101–106 (KSSLGR), D119, 127–129 (TLE), Q148, Y162, and Q174. The active-site Proton donor/acceptor is the E129. The segment at 162–192 (YGSGADGSRYQGQRGPTASRSHVKFHRTHVE) is disordered. The span at 171–181 (YQGQRGPTASR) shows a compositional bias: polar residues. Positions 182 to 192 (SHVKFHRTHVE) are enriched in basic residues.

The protein belongs to the dCTP deaminase family. As to quaternary structure, homotrimer.

It carries out the reaction dCTP + 2 H2O = dUMP + NH4(+) + diphosphate. Its pathway is pyrimidine metabolism; dUMP biosynthesis; dUMP from dCTP: step 1/1. Its function is as follows. Bifunctional enzyme that catalyzes both the deamination of dCTP to dUTP and the hydrolysis of dUTP to dUMP without releasing the toxic dUTP intermediate. The protein is dCTP deaminase, dUMP-forming of Beutenbergia cavernae (strain ATCC BAA-8 / DSM 12333 / CCUG 43141 / JCM 11478 / NBRC 16432 / NCIMB 13614 / HKI 0122).